We begin with the raw amino-acid sequence, 517 residues long: Probable anion transporter 6, chloroplastic (517 aa).

Residues Thr-51 to Leu-73 are disordered. The segment covering Glu-52 to Lys-70 has biased composition (basic and acidic residues). The next 10 helical transmembrane spans lie at Phe-130 to Leu-150, Ile-170 to Pro-190, Phe-229 to Ile-249, Glu-255 to Leu-275, Ser-312 to Gly-332, Leu-352 to Leu-372, Ile-397 to Pro-417, Ile-420 to Cys-440, Ile-452 to Thr-472, and Met-484 to Phe-504.

The protein belongs to the major facilitator superfamily. Sodium/anion cotransporter (TC 2.A.1.14) family. As to expression, expressed in leaf veins and sepals.

It localises to the plastid. It is found in the chloroplast membrane. Functionally, inorganic phosphate and probable anion transporter. This chain is Probable anion transporter 6, chloroplastic (ANTR6), found in Arabidopsis thaliana (Mouse-ear cress).